Here is a 120-residue protein sequence, read N- to C-terminus: Piercer of microtubule wall 2 protein (120 aa).

The span at 1 to 10 (MTECDWEKKS) shows a compositional bias: basic and acidic residues. The segment at 1-25 (MTECDWEKKSTSASNSDTEMKPELP) is disordered.

This sequence belongs to the PIERCE2 family. In terms of assembly, microtubule inner protein component of sperm flagellar doublet microtubules. Interacts with CFAP53, ODAD1 and ODAD3; the interactions link the outer dynein arms docking complex (ODA-DC) to the internal microtubule inner proteins (MIP) in cilium axoneme. Expressed in trachea multiciliated cells.

The protein resides in the cytoplasm. Its subcellular location is the cytoskeleton. The protein localises to the cilium axoneme. It is found in the flagellum axoneme. Its function is as follows. Microtubule inner protein involved in the attachment of outer dynein arms (ODAs) to dynein-decorated doublet microtubules (DMTs) in cilia axoneme, which is required for motile cilia beating. This is Piercer of microtubule wall 2 protein (PIERCE2) from Bos taurus (Bovine).